Reading from the N-terminus, the 342-residue chain is Dihydroorotase (342 aa).

Zn(2+) contacts are provided by H13 and H15. Substrate contacts are provided by residues 15–17 (HLR) and N41. The Zn(2+) site is built by K98, H135, and H173. K98 bears the N6-carboxylysine mark. H135 contacts substrate. Substrate is bound at residue L218. D246 contributes to the Zn(2+) binding site. D246 is an active-site residue. Substrate contacts are provided by H250 and A262.

This sequence belongs to the metallo-dependent hydrolases superfamily. DHOase family. Class II DHOase subfamily. Homodimer. Zn(2+) is required as a cofactor.

It catalyses the reaction (S)-dihydroorotate + H2O = N-carbamoyl-L-aspartate + H(+). The protein operates within pyrimidine metabolism; UMP biosynthesis via de novo pathway; (S)-dihydroorotate from bicarbonate: step 3/3. Catalyzes the reversible cyclization of carbamoyl aspartate to dihydroorotate. This is Dihydroorotase from Vibrio campbellii (strain ATCC BAA-1116).